Reading from the N-terminus, the 372-residue chain is Cell division protein FtsZ 1 (372 aa).

GTP is bound by residues 51–55 (GAGCN), 138–140 (GTG), Glu-169, Arg-173, and Asp-216. Over residues 350-360 (PEEETPLETPE) the composition is skewed to acidic residues. Positions 350–372 (PEEETPLETPEESPSIEISIPEL) are disordered. The segment covering 361–372 (ESPSIEISIPEL) has biased composition (low complexity).

Belongs to the FtsZ family. Homodimer. Polymerizes to form a dynamic ring structure in a strictly GTP-dependent manner. Interacts directly with several other division proteins.

It is found in the cytoplasm. Its function is as follows. Essential cell division protein that forms a contractile ring structure (Z ring) at the future cell division site. The regulation of the ring assembly controls the timing and the location of cell division. One of the functions of the FtsZ ring is to recruit other cell division proteins to the septum to produce a new cell wall between the dividing cells. Binds GTP and shows GTPase activity. This is Cell division protein FtsZ 1 from Pyrococcus furiosus (strain ATCC 43587 / DSM 3638 / JCM 8422 / Vc1).